The following is a 265-amino-acid chain: UDP-N-acetylenolpyruvoylglucosamine reductase (265 aa).

The FAD-binding PCMH-type domain occupies 15-169 (GVGGPAELWT…TRVRLKLKER (155 aa)). The active site involves Arg149. The disordered stretch occupies residues 182-203 (DRARKGQPKRKSAGCAFKNPPG). Cys196 functions as the Proton donor in the catalytic mechanism.

Belongs to the MurB family. Requires FAD as cofactor.

The protein resides in the cytoplasm. The catalysed reaction is UDP-N-acetyl-alpha-D-muramate + NADP(+) = UDP-N-acetyl-3-O-(1-carboxyvinyl)-alpha-D-glucosamine + NADPH + H(+). Its pathway is cell wall biogenesis; peptidoglycan biosynthesis. Its function is as follows. Cell wall formation. This Thermus thermophilus (strain ATCC BAA-163 / DSM 7039 / HB27) protein is UDP-N-acetylenolpyruvoylglucosamine reductase.